Consider the following 187-residue polypeptide: Protein canopy-1 (187 aa).

The N-terminal stretch at Met-1–Ser-24 is a signal peptide. The 154-residue stretch at Glu-28–Val-181 folds into the Saposin B-type domain. Intrachain disulfides connect Cys-32–Cys-177, Cys-35–Cys-170, and Cys-90–Cys-143. Positions His-184–Leu-187 match the Prevents secretion from ER motif.

The protein belongs to the canopy family. In terms of assembly, homodimer. Interacts with fgfr1.

It localises to the endoplasmic reticulum. Its function is as follows. Involved in the maintenance of the midbrain-hindbrain boundary (MHB) organizer. Contributes to a positive-feedback loop of FGF signaling in the MHB, enabling the MHB to exert its role as an organizer for the tectal and cerebellar development. The polypeptide is Protein canopy-1 (cnpy1) (Danio rerio (Zebrafish)).